The sequence spans 215 residues: L-fuculose phosphate aldolase (215 aa).

Residues 28–29 (GN), 43–44 (TG), and 71–72 (SS) contribute to the substrate site. Glu-73 acts as the Proton donor/acceptor in catalysis. The Zn(2+) site is built by Glu-73, His-92, His-94, and His-155.

The protein belongs to the aldolase class II family. AraD/FucA subfamily. As to quaternary structure, homotetramer. Zn(2+) is required as a cofactor.

The enzyme catalyses L-fuculose 1-phosphate = (S)-lactaldehyde + dihydroxyacetone phosphate. The protein operates within carbohydrate degradation; L-fucose degradation; L-lactaldehyde and glycerone phosphate from L-fucose: step 3/3. Functionally, involved in the degradation of L-fucose and D-arabinose. Catalyzes the reversible cleavage of L-fuculose 1-phosphate (Fuc1P) to yield dihydroxyacetone phosphate (DHAP) and L-lactaldehyde. The protein is L-fuculose phosphate aldolase of Escherichia coli O157:H7.